The chain runs to 303 residues: Probable cell division protein WhiA (303 aa).

The H-T-H motif DNA-binding region spans 272-303; sequence SIQQVADALEFPITKSGVNHRLRKINKIADDL.

It belongs to the WhiA family.

Involved in cell division and chromosome segregation. In Streptococcus pyogenes serotype M1, this protein is Probable cell division protein WhiA.